A 748-amino-acid chain; its full sequence is Catalase-peroxidase (748 aa).

Basic and acidic residues predominate over residues 1–14 (MTDTSDARPPHSDA). The interval 1-40 (MTDTSDARPPHSDAKTASNSESENPAIDSPEPKSHAPLTN) is disordered. The tryptophyl-tyrosyl-methioninium (Trp-Tyr) (with M-265) cross-link spans 112–239 (WHAAGTYRIF…FGATTMGLIY (128 aa)). H113 acts as the Proton acceptor in catalysis. A cross-link (tryptophyl-tyrosyl-methioninium (Tyr-Met) (with W-112)) is located at residues 239-265 (YVNPEGPEGKPDPLAAAHDIRETFGRM). H280 contacts heme b.

Belongs to the peroxidase family. Peroxidase/catalase subfamily. As to quaternary structure, homodimer or homotetramer. It depends on heme b as a cofactor. In terms of processing, formation of the three residue Trp-Tyr-Met cross-link is important for the catalase, but not the peroxidase activity of the enzyme.

It catalyses the reaction H2O2 + AH2 = A + 2 H2O. The catalysed reaction is 2 H2O2 = O2 + 2 H2O. Its function is as follows. Bifunctional enzyme with both catalase and broad-spectrum peroxidase activity. The polypeptide is Catalase-peroxidase (Mycolicibacterium gilvum (strain PYR-GCK) (Mycobacterium gilvum (strain PYR-GCK))).